The sequence spans 147 residues: Hemoglobin subunit beta-H0 (147 aa).

The region spanning 3–147 (HFTAEEKAAI…VATALSHKYH (145 aa)) is the Globin domain. 2 residues coordinate heme b: His-64 and His-93.

This sequence belongs to the globin family. Heterotetramer of two alpha chains and two beta chains. In terms of tissue distribution, red blood cells.

Its function is as follows. This is a minor early embryonic beta chain. The protein is Hemoglobin subunit beta-H0 (Hbb-bh0) of Mus musculus (Mouse).